Here is a 392-residue protein sequence, read N- to C-terminus: Bone morphogenetic protein 15 (392 aa).

The N-terminal stretch at 1–18 (MVLLSILRILFLCELVLF) is a signal peptide. The propeptide occupies 19–267 (MEHRAQMAEG…ERESLLRRTR (249 aa)). 3 N-linked (GlcNAc...) asparagine glycosylation sites follow: asparagine 87, asparagine 147, and asparagine 237. Glutamine 268 carries the pyrrolidone carboxylic acid; in P16 and P17 modification. At serine 273 the chain carries Phosphoserine; in P16. O-linked (HexNAc...) threonine; in P17 glycosylation occurs at threonine 277. 3 disulfide bridges follow: cysteine 291–cysteine 357, cysteine 320–cysteine 389, and cysteine 324–cysteine 391. Residue asparagine 373 is glycosylated (N-linked (GlcNAc...) asparagine).

This sequence belongs to the TGF-beta family. In terms of assembly, homodimer. But, in contrast to other members of this family, cannot be disulfide-linked.

The protein resides in the secreted. Functionally, may be involved in follicular development. Oocyte-specific growth/differentiation factor that stimulates folliculogenesis and granulosa cell (GC) growth. This is Bone morphogenetic protein 15 (BMP15) from Homo sapiens (Human).